Here is a 168-residue protein sequence, read N- to C-terminus: Protein OPG162 (168 aa).

Over 1–14 (MKSLNRQTVSMFKK) the chain is Intravirion. A helical membrane pass occupies residues 15-37 (LSVPAAIMMILSTIISGIGTFLH). Topologically, residues 38 to 168 (YKEELMPSAC…SVLCVKKFYK (131 aa)) are virion surface. Residues 54 to 163 (YDKHCYLDTN…CKSTQSVLCV (110 aa)) enclose the C-type lectin domain. 2 disulfides stabilise this stretch: Cys75–Cys162 and Cys141–Cys154. N-linked (GlcNAc...) asparagine; by host glycosylation occurs at Asn133.

Belongs to the orthopoxvirus OPG162 protein family. As to quaternary structure, interacts with protein OPG161. Interacts with protein OPG164. Interacts with protein OPG190.

The protein localises to the virion membrane. It is found in the host Golgi apparatus. Forms a complex with OPG162 and OPG190 to coordinate the incorporation of OPG164 into wrapped enveloped virion (EV) membranes and, subsequently, the production of actin tails. Therefore plays an essential role in efficient cell-to-cell spread of viral particles. The polypeptide is Protein OPG162 (OPG162) (Homo sapiens (Human)).